We begin with the raw amino-acid sequence, 338 residues long: 3 beta-hydroxysteroid dehydrogenase type 7 (338 aa).

Residue tyrosine 159 is the Proton acceptor of the active site. Lysine 163 contributes to the NAD(+) binding site. The next 2 helical transmembrane spans lie at 258–278 and 280–300; these read LLPY…QWLL and PLVL…NTTF.

The protein belongs to the 3-beta-HSD family. In terms of tissue distribution, high levels in liver and lung, moderate levels in spleen, brain, heart, kidney, jejunum and testis. Up-regulated in 3Y1 cells upon growth arrest.

The protein localises to the endoplasmic reticulum membrane. The catalysed reaction is 7alpha-hydroxycholesterol + NAD(+) = 7alpha-hydroxycholest-4-en-3-one + NADH + H(+). It catalyses the reaction 7alpha,25-dihydroxycholesterol + NAD(+) = 7alpha,25-dihydroxy-4-cholesten-3-one + NADH + H(+). It carries out the reaction (25R)-cholest-5-en-3beta,7alpha,26-triol + NAD(+) = (25R)-7alpha,26-dihydroxycholest-4-en-3-one + NADH + H(+). The enzyme catalyses (24S)-7alpha-dihydroxycholesterol + NAD(+) = (24S)-7alpha,24-dihydroxycholest-4-en-3-one + NADH + H(+). It functions in the pathway lipid metabolism; steroid biosynthesis. The 3-beta-HSD enzymatic system plays a crucial role in the biosynthesis of all classes of hormonal steroids. HSD VII is active against four 7-alpha-hydroxylated sterols. Does not metabolize several different C(19/21) steroids as substrates. Involved in bile acid synthesis. Plays a key role in cell positioning and movement in lymphoid tissues by mediating degradation of 7-alpha,25-dihydroxycholesterol (7-alpha,25-OHC): 7-alpha,25-OHC acts as a ligand for the G protein-coupled receptor GPR183/EBI2, a chemotactic receptor for a number of lymphoid cells. This Rattus norvegicus (Rat) protein is 3 beta-hydroxysteroid dehydrogenase type 7.